The primary structure comprises 631 residues: MSKSYLKNFDVIVIGGGHAGTEAAAASARVGCKTLLLTQKITDIGVLSCNPAIGGIGKSHLVKEIDALGGLMARAIDYSGIQFRVLNSKKGPAVRSTRAQADRILYCQNIKKLLKKELNLLILETEVKDLIVKNYQVIGVLTQSNMSFYSRSVVLSTGTFLGGKIHIGLESYSAGRKGEKASIDLALRLRDLPFRVDRLKTGTPPRIDINTINFENLFVQHGDVPTPVFSFMGDISNHPLQIPCFLTHTNEKTHEIIRKNLHKSPLYTGIIKGVGPRYCPSIEDKIVRFPDRKSHQIFLEPEGLTSIEIYPNGISTSLPLDVQKEIVSSVKGLEKSKIITPGYAVEYDFFDPKDLNLTLESKWIKGLFLAGQINGTTGYEEAASQGLLAGLNAALSAKDCKQWFPRRDQAYLGVLIDDLTTQGANEPYRMFTSRSEYRLTLREDNADLRLTEIAYKLGLVDNPRWIRYNEKVLNISNEKNRLKKIKIYPKSSDSTILNQLFNIVLTKEINILNLLKRPEITYENLKYLKNFKVGISDLEAAGQIENEIKYEGYIKRQLEEINRHLKNENTPLLPTYDYNKIKGLSHEAVLKLNDYKPVSVGQASRISGITPATISILLIHLKKEYYKNHLS.

FAD contacts are provided by residues 15–20 (GGGHAG), valine 127, and serine 182. 275-289 (GPRYCPSIEDKIVRF) serves as a coordination point for NAD(+). Glutamine 372 contributes to the FAD binding site.

The protein belongs to the MnmG family. As to quaternary structure, homodimer. Heterotetramer of two MnmE and two MnmG subunits. FAD serves as cofactor.

It is found in the cytoplasm. In terms of biological role, NAD-binding protein involved in the addition of a carboxymethylaminomethyl (cmnm) group at the wobble position (U34) of certain tRNAs, forming tRNA-cmnm(5)s(2)U34. The sequence is that of tRNA uridine 5-carboxymethylaminomethyl modification enzyme MnmG from Buchnera aphidicola subsp. Schizaphis graminum (strain Sg).